Consider the following 213-residue polypeptide: 3-demethoxyubiquinol 3-hydroxylase (213 aa).

Residues glutamate 62, glutamate 92, histidine 95, glutamate 144, glutamate 176, and histidine 179 each contribute to the Fe cation site.

This sequence belongs to the COQ7 family. Fe cation is required as a cofactor.

It is found in the cell membrane. It carries out the reaction a 5-methoxy-2-methyl-3-(all-trans-polyprenyl)benzene-1,4-diol + AH2 + O2 = a 3-demethylubiquinol + A + H2O. It participates in cofactor biosynthesis; ubiquinone biosynthesis. In terms of biological role, catalyzes the hydroxylation of 2-nonaprenyl-3-methyl-6-methoxy-1,4-benzoquinol during ubiquinone biosynthesis. The polypeptide is 3-demethoxyubiquinol 3-hydroxylase (Legionella pneumophila subsp. pneumophila (strain Philadelphia 1 / ATCC 33152 / DSM 7513)).